A 430-amino-acid polypeptide reads, in one-letter code: DNA repair protein recA homolog 3, mitochondrial (430 aa).

A mitochondrion-targeting transit peptide spans 1 to 35; the sequence is MARILRNVYSLRSSLFSSELLRRSVVGTSFQLRGF. 119–126 is a binding site for ATP; it reads GPEASGKT. The disordered stretch occupies residues 385–415; sequence DEAADKETESESEEEDSLRVVVSPDNTDDES.

It belongs to the RecA family.

The protein resides in the mitochondrion. Functionally, involved in recombination ability and DNA strand transfer activity. The polypeptide is DNA repair protein recA homolog 3, mitochondrial (Arabidopsis thaliana (Mouse-ear cress)).